Here is a 1548-residue protein sequence, read N- to C-terminus: Lysine-specific demethylase 5D (1548 aa).

Residues 14-55 (CPVFEPSWAEFRDPLGYIAKIRPIAEKSGICKIRPPADWQPP) enclose the JmjN domain. One can recognise an ARID domain in the interval 79-169 (TRVKLNYLDQ…IIYPYEIFQS (91 aa)). Glycyl lysine isopeptide (Lys-Gly) (interchain with G-Cter in SUMO2) cross-links involve residues lysine 205, lysine 229, lysine 244, and lysine 279. The tract at residues 208–229 (CYSRRGKRLQPEPEPTEEDIEK) is disordered. Residues serine 300 and serine 316 each carry the phosphoserine modification. The segment at 325–371 (VCRICSRGDEVDKFLLCDGCSDNYHIFCLLPPLSEVPKGVWRCPKCI) adopts a PHD-type 1 zinc-finger fold. Position 439 (tyrosine 439) interacts with 2-oxoglutarate. The 167-residue stretch at 467–633 (EYAACGWNLN…VGRQCIEHYR (167 aa)) folds into the JmjC domain. 2 residues coordinate Fe cation: histidine 513 and glutamate 515. 2-oxoglutarate contacts are provided by serine 521, asparagine 523, and lysine 531. A Fe cation-binding site is contributed by histidine 601. The segment at 706 to 758 (CIKCKTTCFLSALACYDCPDSLVCLSHINDLCKCSRNRQYLRYRYTLDELPAM) adopts a C5HC2 zinc-finger fold. Serine 889 and serine 893 each carry phosphoserine. Residue lysine 1123 forms a Glycyl lysine isopeptide (Lys-Gly) (interchain with G-Cter in SUMO2) linkage. A PHD-type 2 zinc finger spans residues 1182–1243 (ICICGQVCAG…DTKFLCPLCM (62 aa)). Residue serine 1355 is modified to Phosphoserine. The segment at 1438–1468 (KPENPGNWSEEQTPERRRQRRQKVVLSRKGE) is disordered.

The protein belongs to the JARID1 histone demethylase family. Interacts withPCGF6, MSH5, ZMYND8, AR. The cofactor is L-ascorbate. Requires Fe(2+) as cofactor.

Its subcellular location is the nucleus. It carries out the reaction N(6),N(6),N(6)-trimethyl-L-lysyl(4)-[histone H3] + 3 2-oxoglutarate + 3 O2 = L-lysyl(4)-[histone H3] + 3 formaldehyde + 3 succinate + 3 CO2. Functionally, histone demethylase that specifically demethylates 'Lys-4' of histone H3, thereby playing a central role in histone code. Does not demethylate histone H3 'Lys-9', H3 'Lys-27', H3 'Lys-36', H3 'Lys-79' or H4 'Lys-20'. Demethylates trimethylated and dimethylated but not monomethylated H3 'Lys-4'. May play a role in spermatogenesis. Involved in transcriptional repression of diverse metastasis-associated genes; in this function seems to cooperate with ZMYND8. Suppresses prostate cancer cell invasion. Regulates androgen receptor (AR) transcriptional activity by demethylating H3K4me3 active transcription marks. This Mus musculus (Mouse) protein is Lysine-specific demethylase 5D (Kdm5d).